The chain runs to 231 residues: Putative histone H1.9 (231 aa).

The 65-residue stretch at 113–177 folds into the H15 domain; the sequence is QKPSTSKVIL…GSAGSFTLGK (65 aa). Position 135 is a phosphoserine (Ser-135). The interval 177–214 is disordered; sequence KKQASKSKLKVKRQRQQRWRSGQRPFGQHRSLLGSKQG. A compositionally biased stretch (basic residues) spans 179 to 194; the sequence is QASKSKLKVKRQRQQR.

This sequence belongs to the histone H1/H5 family. In terms of tissue distribution, expressed exclusively in the testis.

It is found in the nucleus. The protein resides in the chromosome. Its function is as follows. DNA-binding protein that may be implicated in chromatin remodeling and/or transcriptional regulation during spermiogenesis, the process of spermatid maturation into spermatozoa. The chain is Putative histone H1.9 from Homo sapiens (Human).